The following is a 388-amino-acid chain: tRNA (guanine(26)-N(2))-dimethyltransferase (388 aa).

A Trm1 methyltransferase domain is found at 4 to 383 (RTIVEGTTKI…APIAEIKKII (380 aa)). 4 residues coordinate S-adenosyl-L-methionine: R41, R78, D94, and A123. Zn(2+) contacts are provided by C251, C254, C271, and C274.

The protein belongs to the class I-like SAM-binding methyltransferase superfamily. Trm1 family.

The enzyme catalyses guanosine(26) in tRNA + 2 S-adenosyl-L-methionine = N(2)-dimethylguanosine(26) in tRNA + 2 S-adenosyl-L-homocysteine + 2 H(+). Dimethylates a single guanine residue at position 26 of a number of tRNAs using S-adenosyl-L-methionine as donor of the methyl groups. The protein is tRNA (guanine(26)-N(2))-dimethyltransferase of Methanosarcina acetivorans (strain ATCC 35395 / DSM 2834 / JCM 12185 / C2A).